A 378-amino-acid polypeptide reads, in one-letter code: uncharacterized protein (378 aa).

The next 11 helical transmembrane spans lie at serine 12–phenylalanine 34, valine 44–glycine 66, serine 92–isoleucine 112, glycine 132–alanine 154, glutamate 161–threonine 180, threonine 200–methionine 222, valine 235–valine 257, valine 267–alanine 285, leucine 290–isoleucine 312, phenylalanine 327–isoleucine 349, and leucine 356–leucine 373.

It is found in the cell membrane. This is an uncharacterized protein from Aquifex aeolicus (strain VF5).